We begin with the raw amino-acid sequence, 880 residues long: Alanine--tRNA ligase (880 aa).

Positions 569, 573, 671, and 675 each coordinate Zn(2+).

The protein belongs to the class-II aminoacyl-tRNA synthetase family. As to quaternary structure, homotetramer. It depends on Zn(2+) as a cofactor.

The protein resides in the cytoplasm. It catalyses the reaction tRNA(Ala) + L-alanine + ATP = L-alanyl-tRNA(Ala) + AMP + diphosphate. Catalyzes the attachment of alanine to tRNA(Ala) in a two-step reaction: alanine is first activated by ATP to form Ala-AMP and then transferred to the acceptor end of tRNA(Ala). Also edits incorrectly charged Ser-tRNA(Ala) and Gly-tRNA(Ala) via its editing domain. This Buchnera aphidicola subsp. Baizongia pistaciae (strain Bp) protein is Alanine--tRNA ligase.